A 312-amino-acid chain; its full sequence is MNTPPLICLAGPTAAGKSAATLALAERWPLEIINVDSATIYRGMDIGTAKPSAAEQAQVAQHLLDIRDPSQAYSAADFRTDTLALIEDIQARGRIPLLAGGTMLYYKALREGLDDLPQADPVLRAELEARAANEGWPALHAELARHDPITAARLSPNDSQRIQRALEVCLLSGRAMSALLTGTRRPAPSDLRFVTISLEPSDRAGLHARIAQRFDAMLQAGLEAEVRSLKQRTDLHPGLPSVRCVGYRQMWAYLDGEVSFDEAREQGIAATRQLAKRQLTWLRAQPERVIVDCLAAGTAARVVDIAARYLPG.

Position 11–18 (11–18 (GPTAAGKS)) interacts with ATP. Residue 13–18 (TAAGKS) participates in substrate binding. 3 interaction with substrate tRNA regions span residues 36-39 (DSAT), 160-164 (QRIQR), and 243-248 (RCVGYR).

The protein belongs to the IPP transferase family. As to quaternary structure, monomer. The cofactor is Mg(2+).

The enzyme catalyses adenosine(37) in tRNA + dimethylallyl diphosphate = N(6)-dimethylallyladenosine(37) in tRNA + diphosphate. Its function is as follows. Catalyzes the transfer of a dimethylallyl group onto the adenine at position 37 in tRNAs that read codons beginning with uridine, leading to the formation of N6-(dimethylallyl)adenosine (i(6)A). The polypeptide is tRNA dimethylallyltransferase (Bordetella avium (strain 197N)).